Reading from the N-terminus, the 329-residue chain is 4-hydroxythreonine-4-phosphate dehydrogenase (329 aa).

The substrate site is built by His136 and Thr137. 3 residues coordinate a divalent metal cation: His166, His211, and His266. Substrate-binding residues include Lys274, Asn283, and Arg292.

It belongs to the PdxA family. As to quaternary structure, homodimer. Zn(2+) is required as a cofactor. The cofactor is Mg(2+). Co(2+) serves as cofactor.

The protein resides in the cytoplasm. It catalyses the reaction 4-(phosphooxy)-L-threonine + NAD(+) = 3-amino-2-oxopropyl phosphate + CO2 + NADH. Its pathway is cofactor biosynthesis; pyridoxine 5'-phosphate biosynthesis; pyridoxine 5'-phosphate from D-erythrose 4-phosphate: step 4/5. Its function is as follows. Catalyzes the NAD(P)-dependent oxidation of 4-(phosphooxy)-L-threonine (HTP) into 2-amino-3-oxo-4-(phosphooxy)butyric acid which spontaneously decarboxylates to form 3-amino-2-oxopropyl phosphate (AHAP). This chain is 4-hydroxythreonine-4-phosphate dehydrogenase, found in Salmonella arizonae (strain ATCC BAA-731 / CDC346-86 / RSK2980).